The primary structure comprises 384 residues: Polyketide synthase BAS (384 aa).

The Nucleophile and monoketide coumarate intermediate role is filled by Cys157. Position 157 is an S-(4-hydroxycinnamyl)cysteine (Cys157).

It belongs to the thiolase-like superfamily. Chalcone/stilbene synthases family. As to quaternary structure, homodimer.

The catalysed reaction is 4-coumaroyl-CoA + malonyl-CoA + H2O + H(+) = 4-hydroxybenzalacetone + 2 CO2 + 2 CoA. It participates in secondary metabolite biosynthesis; flavonoid biosynthesis. Its function is as follows. Polyketide synthase producing 4-hydroxybenzalacetone. Can use p-coumaryl-CoA as substrate but does not accept hexanoyl-CoA, isobutyryl-CoA, isovaleryl-CoA, and acetyl-CoA as a substrates. Catalyzes the initial key reaction step in the biosynthesis of phenylbutanoids. This chain is Polyketide synthase BAS (BAS), found in Rheum palmatum (Chinese rhubarb).